Here is a 325-residue protein sequence, read N- to C-terminus: RNA ligase 1 (325 aa).

It depends on Mg(2+) as a cofactor. Mn(2+) serves as cofactor. Post-translationally, AMPylates itself (auto-AMPylation).

The enzyme catalyses ATP + (ribonucleotide)n-3'-hydroxyl + 5'-phospho-(ribonucleotide)m = (ribonucleotide)n+m + AMP + diphosphate.. Functionally, functions as an RNA ligase, in vitro. The ligation reaction entails three nucleotidyl transfer steps. In the first step, the RNA ligase reacts with ATP in the absence of nucleic acid to form a covalent ligase-AMP intermediate and release pyrophosphate. In step 2, the ligase-AMP binds to the nucleic acid and transfers the adenylate to the 5'-PO4 terminus to form an adenylylated intermediate. In step 3, the RNA ligase directs the attack of the 3'-OH on the 5'-phosphoanhydride linkage, resulting in a repaired 3'-5' phosphodiester and release of AMP. Exhibits selectivity for single-stranded RNA substrates and may not have nick-sealing activity on double-stranded DNA-RNA hybrids. May play a role in maintaining RNA integrity under stress conditions, for example in response to reactive oxygen species (ROS). The polypeptide is RNA ligase 1 (Pongo abelii (Sumatran orangutan)).